Here is a 449-residue protein sequence, read N- to C-terminus: Exodeoxyribonuclease 7 large subunit (449 aa).

It belongs to the XseA family. In terms of assembly, heterooligomer composed of large and small subunits.

It is found in the cytoplasm. It catalyses the reaction Exonucleolytic cleavage in either 5'- to 3'- or 3'- to 5'-direction to yield nucleoside 5'-phosphates.. Its function is as follows. Bidirectionally degrades single-stranded DNA into large acid-insoluble oligonucleotides, which are then degraded further into small acid-soluble oligonucleotides. In Salmonella paratyphi A (strain ATCC 9150 / SARB42), this protein is Exodeoxyribonuclease 7 large subunit.